The primary structure comprises 211 residues: DNA/RNA-binding protein ALBA2 (211 aa).

A compositionally biased stretch (basic and acidic residues) spans N84–G99. The interval N84–N121 is disordered. A compositionally biased stretch (acidic residues) spans D100–E113.

It belongs to the histone-like Alba family. In terms of assembly, identified in a TARE6-associated complex consisting of over 30 proteins and including ALBA1, ALBA2 and ALBA4; the complex binds to the non-coding subtelomeric repeat region TARE6.

The protein resides in the nucleus. It is found in the chromosome. It localises to the telomere. The protein localises to the cytoplasm. Possesses DNA- and RNA-binding activities. Binds to DNA with relaxed sequence specificity. Associates with the subtelomeric TARE6 repeats. In Plasmodium falciparum (isolate 3D7), this protein is DNA/RNA-binding protein ALBA2.